Here is a 646-residue protein sequence, read N- to C-terminus: Acetyl-coenzyme A synthetase (646 aa).

Residues 190–193 and threonine 309 each bind CoA; that span reads RAGK. Residues 385–387, 409–414, aspartate 498, and arginine 513 contribute to the ATP site; these read GEP and DTWWQT. Serine 521 contacts CoA. Arginine 524 is an ATP binding site. Mg(2+) is bound by residues valine 535, histidine 537, and valine 540. Arginine 582 contacts CoA. Lysine 607 is subject to N6-acetyllysine.

It belongs to the ATP-dependent AMP-binding enzyme family. Requires Mg(2+) as cofactor. In terms of processing, acetylated. Deacetylation by the SIR2-homolog deacetylase activates the enzyme.

It catalyses the reaction acetate + ATP + CoA = acetyl-CoA + AMP + diphosphate. Its function is as follows. Catalyzes the conversion of acetate into acetyl-CoA (AcCoA), an essential intermediate at the junction of anabolic and catabolic pathways. AcsA undergoes a two-step reaction. In the first half reaction, AcsA combines acetate with ATP to form acetyl-adenylate (AcAMP) intermediate. In the second half reaction, it can then transfer the acetyl group from AcAMP to the sulfhydryl group of CoA, forming the product AcCoA. The polypeptide is Acetyl-coenzyme A synthetase (Pseudoalteromonas atlantica (strain T6c / ATCC BAA-1087)).